A 562-amino-acid polypeptide reads, in one-letter code: Arylsulfatase H (562 aa).

Asp-15, Asp-16, and Cys-55 together coordinate Ca(2+). Cys-55 acts as the Nucleophile in catalysis. 3-oxoalanine (Cys) is present on Cys-55. Position 115 (Lys-115) interacts with substrate. His-117 is an active-site residue. 2 helical membrane passes run 167–187 (LWIS…PKFA) and 189–209 (WFSV…LFFT). Residue His-271 coordinates substrate. Ca(2+) contacts are provided by Asp-323 and Asn-324. Substrate is bound at residue Lys-348.

It belongs to the sulfatase family. Ca(2+) is required as a cofactor. In terms of processing, the conversion to 3-oxoalanine (also known as C-formylglycine, FGly), of a serine or cysteine residue in prokaryotes and of a cysteine residue in eukaryotes, is critical for catalytic activity.

It is found in the membrane. The polypeptide is Arylsulfatase H (ARSH) (Homo sapiens (Human)).